Consider the following 174-residue polypeptide: Transcriptional repressor NrdR (174 aa).

The segment at 3–34 (CPFCQHSDTRVIDSRVSEDGTTIRRRRECEAC) is a zinc-finger region. The region spanning 49–139 (PTVVKSDGGR…VYRSFQDVAD (91 aa)) is the ATP-cone domain.

Belongs to the NrdR family. Zn(2+) serves as cofactor.

In terms of biological role, negatively regulates transcription of bacterial ribonucleotide reductase nrd genes and operons by binding to NrdR-boxes. This Xanthomonas oryzae pv. oryzae (strain MAFF 311018) protein is Transcriptional repressor NrdR.